The following is a 415-amino-acid chain: Casein kinase I isoform delta (415 aa).

The Protein kinase domain occupies Tyr9–Phe277. ATP contacts are provided by residues Ile15–Ile23 and Lys38. Asp128 (proton acceptor) is an active-site residue. A compositionally biased stretch (basic and acidic residues) spans Ala301–Leu315. Residues Ala301–Arg415 form a disordered region. The interval His317–Pro342 is autoinhibitory. Residues Thr341–Thr352 are compositionally biased toward low complexity. Residues Asn380–Arg415 are compositionally biased toward polar residues.

The protein belongs to the protein kinase superfamily. Monomer. Interacts with per1 and per2. Component of the circadian core oscillator. In terms of processing, autophosphorylated on serine and threonine residues. In terms of tissue distribution, detected in retina photoreceptor cells.

Its subcellular location is the cytoplasm. It is found in the nucleus. It carries out the reaction L-seryl-[protein] + ATP = O-phospho-L-seryl-[protein] + ADP + H(+). It catalyses the reaction L-threonyl-[protein] + ATP = O-phospho-L-threonyl-[protein] + ADP + H(+). The enzyme catalyses L-seryl-[tau protein] + ATP = O-phospho-L-seryl-[tau protein] + ADP + H(+). The catalysed reaction is L-threonyl-[tau protein] + ATP = O-phospho-L-threonyl-[tau protein] + ADP + H(+). Exhibits substrate-dependent heparin activation. Casein kinases are operationally defined by their preferential utilization of acidic proteins such as caseins as substrates. Can phosphorylate a large number of proteins. Central component of the circadian clock. May act as a negative regulator of circadian rhythmicity by phosphorylating per1 and per2, which may lead to their degradation. Participates in wnt signaling. In terms of biological role, has no kinase activity. This Xenopus laevis (African clawed frog) protein is Casein kinase I isoform delta (csnk1d).